The primary structure comprises 377 residues: Lactosylceramide 1,3-N-acetyl-beta-D-glucosaminyltransferase (377 aa).

Residues 1 to 12 (MLISARRLRRCQ) lie on the Cytoplasmic side of the membrane. A helical; Signal-anchor for type II membrane protein membrane pass occupies residues 13–30 (FFQLLTSCFVLSLMALLV). Residues 31–377 (QEDNSLINHV…DTYPCSAAWS (347 aa)) lie on the Lumenal side of the membrane. N56, N167, and N275 each carry an N-linked (GlcNAc...) asparagine glycan.

This sequence belongs to the glycosyltransferase 31 family.

It is found in the golgi apparatus membrane. It carries out the reaction a beta-D-Gal-(1-&gt;4)-beta-D-Glc-(1&lt;-&gt;1)-Cer(d18:1(4E)) + UDP-N-acetyl-alpha-D-glucosamine = a beta-D-GlcNAc-(1-&gt;3)-beta-D-Gal-(1-&gt;4)-beta-D-Glc-(1&lt;-&gt;1)-Cer(d18:1(4E)) + UDP + H(+). It catalyses the reaction a neolactoside nLc4Cer(d18:1(4E)) + UDP-N-acetyl-alpha-D-glucosamine = a neolactoside IV(3)-beta-GlcNAc-nLc4Cer(d18:1(4E)) + UDP + H(+). It functions in the pathway protein modification; protein glycosylation. Its function is as follows. Beta-1,3-N-acetylglucosaminyltransferase that plays a key role in the synthesis of lacto- or neolacto-series carbohydrate chains on glycolipids. The sequence is that of Lactosylceramide 1,3-N-acetyl-beta-D-glucosaminyltransferase (b3gnt5) from Xenopus tropicalis (Western clawed frog).